We begin with the raw amino-acid sequence, 238 residues long: Fatty acid metabolism regulator protein (238 aa).

Residues 6-74 (KGPASFAEKY…HGKPTRVNNF (69 aa)) form the HTH gntR-type domain. Residues 34-53 (ERELSELIGVTRTTLREVLQ) constitute a DNA-binding region (H-T-H motif).

As to quaternary structure, homodimer.

It is found in the cytoplasm. Multifunctional regulator of fatty acid metabolism. The protein is Fatty acid metabolism regulator protein of Shewanella putrefaciens (strain CN-32 / ATCC BAA-453).